The chain runs to 129 residues: NADH-quinone oxidoreductase subunit A (129 aa).

3 helical membrane passes run 9–29 (FPIG…LGLA), 68–88 (LLFI…VLLL), and 97–117 (LGWP…AGLV).

It belongs to the complex I subunit 3 family. In terms of assembly, NDH-1 is composed of 14 different subunits. Subunits NuoA, H, J, K, L, M, N constitute the membrane sector of the complex.

The protein localises to the cell inner membrane. It catalyses the reaction a quinone + NADH + 5 H(+)(in) = a quinol + NAD(+) + 4 H(+)(out). Functionally, NDH-1 shuttles electrons from NADH, via FMN and iron-sulfur (Fe-S) centers, to quinones in the respiratory chain. The immediate electron acceptor for the enzyme in this species is believed to be ubiquinone. Couples the redox reaction to proton translocation (for every two electrons transferred, four hydrogen ions are translocated across the cytoplasmic membrane), and thus conserves the redox energy in a proton gradient. The polypeptide is NADH-quinone oxidoreductase subunit A (Anaeromyxobacter sp. (strain K)).